The sequence spans 311 residues: Olfactory receptor 6C3 (311 aa).

At 1 to 22 (MNHTMVTEFVLLGLSDDPDLQI) the chain is on the extracellular side. Asn2 carries an N-linked (GlcNAc...) asparagine glycan. The helical transmembrane segment at 23-43 (VIFLFLFITYILSVTGNLTII) threads the bilayer. Residues 44–51 (TLTFVDSH) are Cytoplasmic-facing. The helical transmembrane segment at 52–72 (LQTPMYFFLRNFSFLEISFTT) threads the bilayer. Residues 73–96 (VCIPRFLGAIITRNKTISYNNCAA) lie on the Extracellular side of the membrane. Cys94 and Cys186 are disulfide-bonded. Residues 97–117 (QLFFFIFMGVTEFYILTAMSY) form a helical membrane-spanning segment. At 118 to 136 (DRYVAICKPLHYTSIMNRK) the chain is on the cytoplasmic side. The chain crosses the membrane as a helical span at residues 137–157 (LCTLLVLCAWLSGFLTIFPPL). Over 158 to 194 (MLLLQLDYCASNVIDHFACDYFPLLQLSCSDTWLLEV) the chain is Extracellular. The chain crosses the membrane as a helical span at residues 195-214 (IGFYFALVTLLFTLALVILS). Topologically, residues 215-234 (YMYIIRTILRIPSASQRKKA) are cytoplasmic. Residues 235 to 255 (FSTCSSHMIVISISYGSCIFM) form a helical membrane-spanning segment. Residues 256–268 (YANPSAKEKASLT) lie on the Extracellular side of the membrane. Residues 269-289 (KGIAILNTSVAPMLNPFIYTL) traverse the membrane as a helical segment. Over 290-311 (RNQQVKQAFKNVVHKVVFYANQ) the chain is Cytoplasmic.

It belongs to the G-protein coupled receptor 1 family.

Its subcellular location is the cell membrane. Odorant receptor. The sequence is that of Olfactory receptor 6C3 (OR6C3) from Homo sapiens (Human).